Reading from the N-terminus, the 176-residue chain is Crossover junction endodeoxyribonuclease RuvC (176 aa).

Active-site residues include aspartate 12, glutamate 72, and aspartate 144. Residues aspartate 12, glutamate 72, and aspartate 144 each coordinate Mg(2+).

It belongs to the RuvC family. In terms of assembly, homodimer which binds Holliday junction (HJ) DNA. The HJ becomes 2-fold symmetrical on binding to RuvC with unstacked arms; it has a different conformation from HJ DNA in complex with RuvA. In the full resolvosome a probable DNA-RuvA(4)-RuvB(12)-RuvC(2) complex forms which resolves the HJ. Mg(2+) serves as cofactor.

The protein resides in the cytoplasm. It carries out the reaction Endonucleolytic cleavage at a junction such as a reciprocal single-stranded crossover between two homologous DNA duplexes (Holliday junction).. Functionally, the RuvA-RuvB-RuvC complex processes Holliday junction (HJ) DNA during genetic recombination and DNA repair. Endonuclease that resolves HJ intermediates. Cleaves cruciform DNA by making single-stranded nicks across the HJ at symmetrical positions within the homologous arms, yielding a 5'-phosphate and a 3'-hydroxyl group; requires a central core of homology in the junction. The consensus cleavage sequence is 5'-(A/T)TT(C/G)-3'. Cleavage occurs on the 3'-side of the TT dinucleotide at the point of strand exchange. HJ branch migration catalyzed by RuvA-RuvB allows RuvC to scan DNA until it finds its consensus sequence, where it cleaves and resolves the cruciform DNA. The polypeptide is Crossover junction endodeoxyribonuclease RuvC (Methylocella silvestris (strain DSM 15510 / CIP 108128 / LMG 27833 / NCIMB 13906 / BL2)).